The following is a 210-amino-acid chain: CLAVATA3/ESR (CLE)-related protein 4A-3 (210 aa).

Residues 1–21 (MAKNAMLCLLILRVVLALAFA) form the signal peptide. Positions 21-83 (ATNKKGDEEP…SNQLPNNNWM (63 aa)) are required for secretion from the host cytoplasm to the host apoplasm. A glycan (N-linked (GlcNAc...) asparagine) is linked at N32. The segment at 116–210 (RKTGMHSQRH…APAGPDPIHH (95 aa)) is disordered. Basic and acidic residues-rich tracts occupy residues 125 to 137 (HHEE…EKRV) and 144 to 200 (PIHH…EKRG). The A-1 repeat unit spans residues 127–135 (EETTLEQEK). The 4 X approximate repeat A stretch occupies residues 127–198 (EETTLEQEKR…HEDTTLEQEK (72 aa)). Residues 136–147 (RVAGAGPDPIHH) form a CLE-1 repeat. A 4 X approximate repeat CLE region spans residues 136–210 (RVAGAGPDPI…APAGPDPIHH (75 aa)). The stretch at 148-156 (QDTTLEQEK) is one A-2 repeat. The CLE-2 repeat unit spans residues 157 to 168 (RAVPAGPDPKHH). One copy of the A-3 repeat lies at 169 to 177 (EETTLEQEK). One copy of the CLE-3 repeat lies at 178–189 (RAVPAGPDPKHH). One copy of the A-4 repeat lies at 190–198 (EDTTLEQEK). One copy of the CLE-4 repeat lies at 199 to 210 (RGAPAGPDPIHH).

This sequence belongs to the CLV3/ESR signal peptide family. As to expression, highly expressed exclusively within the dorsal esophageal gland cell during syncytium formation in host plants.

It localises to the secreted. The protein resides in the host cytoplasm. It is found in the host extracellular space. The protein localises to the extracellular space. Its subcellular location is the apoplast. Its function is as follows. Mimics host plant CLE extracellular signal peptides that regulate cell fate. May play a role in the differentiation or division of feeding cells (syncytia) induced in plant roots during infection. The chain is CLAVATA3/ESR (CLE)-related protein 4A-3 (CLE-4A-3) from Globodera rostochiensis (Golden nematode worm).